Here is a 114-residue protein sequence, read N- to C-terminus: Ribonuclease P protein component (114 aa).

This sequence belongs to the RnpA family. In terms of assembly, consists of a catalytic RNA component (M1 or rnpB) and a protein subunit.

It catalyses the reaction Endonucleolytic cleavage of RNA, removing 5'-extranucleotides from tRNA precursor.. In terms of biological role, RNaseP catalyzes the removal of the 5'-leader sequence from pre-tRNA to produce the mature 5'-terminus. It can also cleave other RNA substrates such as 4.5S RNA. The protein component plays an auxiliary but essential role in vivo by binding to the 5'-leader sequence and broadening the substrate specificity of the ribozyme. The polypeptide is Ribonuclease P protein component (Clostridioides difficile (strain 630) (Peptoclostridium difficile)).